A 439-amino-acid chain; its full sequence is Proline--tRNA ligase (439 aa).

This sequence belongs to the class-II aminoacyl-tRNA synthetase family. ProS type 2 subfamily. Homodimer.

It localises to the cytoplasm. It carries out the reaction tRNA(Pro) + L-proline + ATP = L-prolyl-tRNA(Pro) + AMP + diphosphate. Catalyzes the attachment of proline to tRNA(Pro) in a two-step reaction: proline is first activated by ATP to form Pro-AMP and then transferred to the acceptor end of tRNA(Pro). The polypeptide is Proline--tRNA ligase (Rhodopseudomonas palustris (strain BisB5)).